A 62-amino-acid polypeptide reads, in one-letter code: Protein DsrB (62 aa).

The protein belongs to the DsrB family.

The sequence is that of Protein DsrB from Shigella boydii serotype 18 (strain CDC 3083-94 / BS512).